The sequence spans 525 residues: GMP synthase [glutamine-hydrolyzing] (525 aa).

The Glutamine amidotransferase type-1 domain maps to 9 to 207 (RILILDFGSQ…VRDICQCEAL (199 aa)). Catalysis depends on Cys-86, which acts as the Nucleophile. Residues His-181 and Glu-183 contribute to the active site. One can recognise a GMPS ATP-PPase domain in the interval 208-400 (WTPAKIIDDA…LGLPYNMLYR (193 aa)). 235–241 (SGGVDSS) is a binding site for ATP.

In terms of assembly, homodimer.

It catalyses the reaction XMP + L-glutamine + ATP + H2O = GMP + L-glutamate + AMP + diphosphate + 2 H(+). The protein operates within purine metabolism; GMP biosynthesis; GMP from XMP (L-Gln route): step 1/1. In terms of biological role, catalyzes the synthesis of GMP from XMP. The chain is GMP synthase [glutamine-hydrolyzing] from Pectobacterium carotovorum subsp. carotovorum (strain PC1).